The following is a 174-amino-acid chain: CEN-like protein 1 (174 aa).

It belongs to the phosphatidylethanolamine-binding protein family. As to expression, expressed in vegetative axillary meristems but not in the main shoot meristem.

The protein resides in the cytoplasm. Its function is as follows. May form complexes with phosphorylated ligands by interfering with kinases and their effectors. The sequence is that of CEN-like protein 1 (CET1) from Nicotiana tabacum (Common tobacco).